The chain runs to 393 residues: MNVTTTRKDLMIVNMGPHHPSMHGVLRLILTLDGEDVIDCEPILGYLHRGMEKIAENRTVIQYLPYVTRWDYLATMFTEAITINGPEQLGNIQVPKRASYIRIIMLELSRIASHLLWLGPFMADIGAQTPFFYIFRERELVYDLFEAATGMRMMHNYFRIGGVAADLPYGWIDKCLDFCDYFLTAVSEYQKLITRNPIFLERVEGVGIIGGEEAINWGLSGPMLRASGIEWDLRKVDRYECYGELDWEIRWQKEGDSLARYLVRMSEMTESIKIIQQALEGIPGGPYENLEIRCFDREKDPEWDGFEYRFISKKPSPTFELPKQELYVRVEAPKGELGIFLIGDQSGFPWRWKIRPPGFINLQILPQLVKRMKLADIMTILGSIDIIMGEVDR.

It belongs to the complex I 49 kDa subunit family. In terms of assembly, NDH is composed of at least 16 different subunits, 5 of which are encoded in the nucleus.

The protein localises to the plastid. It is found in the chloroplast thylakoid membrane. It catalyses the reaction a plastoquinone + NADH + (n+1) H(+)(in) = a plastoquinol + NAD(+) + n H(+)(out). The catalysed reaction is a plastoquinone + NADPH + (n+1) H(+)(in) = a plastoquinol + NADP(+) + n H(+)(out). NDH shuttles electrons from NAD(P)H:plastoquinone, via FMN and iron-sulfur (Fe-S) centers, to quinones in the photosynthetic chain and possibly in a chloroplast respiratory chain. The immediate electron acceptor for the enzyme in this species is believed to be plastoquinone. Couples the redox reaction to proton translocation, and thus conserves the redox energy in a proton gradient. In Oenothera biennis (German evening primrose), this protein is NAD(P)H-quinone oxidoreductase subunit H, chloroplastic.